The sequence spans 797 residues: Speckle targeted PIP5K1A-regulated poly(A) polymerase (797 aa).

Residues 14-44 (FHCNLCHVNIPNRPSLEDHVKGKKHLHLLRL) form a Matrin-type zinc finger. The RRM domain maps to 54-126 (NSVFVSGFKA…LKLRVKPREK (73 aa)). Position 205 (S205) interacts with ATP. Residues D216 and D218 each contribute to the Mg(2+) site. D216, D218, N319, R341, Y363, and H495 together coordinate UTP. N319 is an ATP binding site. The region spanning 421–495 (DLCTLLFGFF…NVLDPFELNH (75 aa)) is the PAP-associated domain. Residues 544–787 (QSEAAASSQP…FLPKMAETIM (244 aa)) are KA1; binds the bulging loops of U6 snRNA but is dispensable for terminal uridylyltransferase activity. Positions 611–659 (EETQSLDKTDKSGSEMEVNNNRSLEDTNIQVKGEAGKKRPLSVEEGPST) are disordered. Residues 615–624 (SLDKTDKSGS) show a composition bias toward basic and acidic residues. Over residues 627–640 (EVNNNRSLEDTNIQ) the composition is skewed to polar residues.

Belongs to the DNA polymerase type-B-like family. In terms of assembly, associates with the cleavage and polyadenylation specificity factor (CPSF) complex. The cofactor is Mg(2+). Mn(2+) serves as cofactor.

The protein resides in the nucleus. The protein localises to the nucleolus. Its subcellular location is the nucleus speckle. It catalyses the reaction RNA(n) + UTP = RNA(n)-3'-uridine ribonucleotide + diphosphate. The catalysed reaction is RNA(n) + ATP = RNA(n)-3'-adenine ribonucleotide + diphosphate. Poly(A) polymerase that creates the 3'-poly(A) tail of specific pre-mRNAs. In addition to polyadenylation, it is also required for the 3'-end cleavage of pre-mRNAs: binds to the 3'UTR of targeted pre-mRNAs and promotes the recruitment and assembly of the CPSF complex on the 3'UTR of pre-mRNAs. In addition to adenylyltransferase activity, also has uridylyltransferase activity. However, the ATP ratio is higher than UTP in cells, suggesting that it functions primarily as a poly(A) polymerase. This is Speckle targeted PIP5K1A-regulated poly(A) polymerase (tut1) from Danio rerio (Zebrafish).